Reading from the N-terminus, the 346-residue chain is Methylthioribose-1-phosphate isomerase 1 (346 aa).

Substrate-binding positions include 48–50, Arg-91, and Gln-196; that span reads RGA. Asp-237 acts as the Proton donor in catalysis. 247 to 248 contributes to the substrate binding site; it reads NK.

This sequence belongs to the eIF-2B alpha/beta/delta subunits family. MtnA subfamily.

It carries out the reaction 5-(methylsulfanyl)-alpha-D-ribose 1-phosphate = 5-(methylsulfanyl)-D-ribulose 1-phosphate. The protein operates within amino-acid biosynthesis; L-methionine biosynthesis via salvage pathway; L-methionine from S-methyl-5-thio-alpha-D-ribose 1-phosphate: step 1/6. Its function is as follows. Catalyzes the interconversion of methylthioribose-1-phosphate (MTR-1-P) into methylthioribulose-1-phosphate (MTRu-1-P). This is Methylthioribose-1-phosphate isomerase 1 from Pseudothermotoga lettingae (strain ATCC BAA-301 / DSM 14385 / NBRC 107922 / TMO) (Thermotoga lettingae).